We begin with the raw amino-acid sequence, 691 residues long: Elongation factor G (691 aa).

Positions 12–286 (KKLRNIGIMA…GILEYLPSPL (275 aa)) constitute a tr-type G domain. Residues 21–28 (AHIDAGKT), 85–89 (DTPGH), and 139–142 (NKMD) each bind GTP.

Belongs to the TRAFAC class translation factor GTPase superfamily. Classic translation factor GTPase family. EF-G/EF-2 subfamily.

Its subcellular location is the cytoplasm. In terms of biological role, catalyzes the GTP-dependent ribosomal translocation step during translation elongation. During this step, the ribosome changes from the pre-translocational (PRE) to the post-translocational (POST) state as the newly formed A-site-bound peptidyl-tRNA and P-site-bound deacylated tRNA move to the P and E sites, respectively. Catalyzes the coordinated movement of the two tRNA molecules, the mRNA and conformational changes in the ribosome. This is Elongation factor G from Thermosipho africanus (strain TCF52B).